Consider the following 167-residue polypeptide: Ribosome maturation factor RimM (167 aa).

The region spanning 94-165 is the PRC barrel domain; it reads ENEFYYSDII…KIIITPMEGL (72 aa).

This sequence belongs to the RimM family. Binds ribosomal protein uS19.

It localises to the cytoplasm. Functionally, an accessory protein needed during the final step in the assembly of 30S ribosomal subunit, possibly for assembly of the head region. Essential for efficient processing of 16S rRNA. May be needed both before and after RbfA during the maturation of 16S rRNA. It has affinity for free ribosomal 30S subunits but not for 70S ribosomes. This Staphylococcus aureus (strain NCTC 8325 / PS 47) protein is Ribosome maturation factor RimM.